Here is a 451-residue protein sequence, read N- to C-terminus: Runt-related transcription factor 1 (451 aa).

Residues 1–37 (MRIPVDASTSRRFTPPSTALSPGKMSEALPLGAPDGG) form a disordered region. The span at 7–20 (ASTSRRFTPPSTAL) shows a compositional bias: polar residues. Thr14 carries the post-translational modification Phosphothreonine. Ser21 bears the Phosphoserine mark. Residues Lys24 and Lys43 each carry the N6-acetyllysine modification. The 129-residue stretch at 50–178 (SMVEVLADHP…TVDGPREPRR (129 aa)) folds into the Runt domain. Residues 80–84 (RCNKT) are interaction with DNA. 4 residues coordinate chloride: Asn112, Glu116, Arg139, and Val170. Interaction with DNA regions lie at residues 135–143 (RFVGRSGRG) and 168–177 (ITVDGPREPR). Disordered stretches follow at residues 170–195 (VDGPREPRRHRQKLDDQTKPGSLSFS) and 209–252 (MRVS…SPPW). A phosphoserine mark is found at Ser193 and Ser212. A compositionally biased stretch (polar residues) spans 222-247 (PRASLNHSTAFNPQPQSQMQDARQIQ). Ser249 is modified (phosphoserine; by HIPK2). Phosphoserine is present on residues Ser266 and Ser268. The interval 268-290 (SVHPATPISPGRASGMTSLSAEL) is disordered. At Thr273 the chain carries Phosphothreonine; by HIPK2. The residue at position 276 (Ser276) is a Phosphoserine; by HIPK2. Residues 291 to 370 (SSRLSTAPDL…SQAQAGPFQT (80 aa)) are interaction with KAT6A. Thr296 is modified (phosphothreonine). Positions 307–399 (RQFPTLPSIS…MVGGERSPPR (93 aa)) are interaction with KAT6B. Residues 361–401 (SQAQAGPFQTGSPSYHLYYGASAGSYQFSMVGGERSPPRIL) form an interaction with FOXP3 region. Positions 406–451 (NASTGAALLNPSLPSQSDVVETEGSHSNSPTNMPPARLEEAVWRPY) are disordered. Positions 417 to 436 (SLPSQSDVVETEGSHSNSPT) are enriched in polar residues. Ser434 is subject to Phosphoserine. Basic and acidic residues predominate over residues 442–451 (RLEEAVWRPY).

In terms of assembly, heterodimer with CBFB. RUNX1 binds DNA as a monomer and through the Runt domain. DNA-binding is increased by heterodimerization. Interacts with TLE1 and ALYREF/THOC4. Interacts with HIPK2, ELF1, ELF2 and SPI1. Interacts via its Runt domain with the ELF4 N-terminal region. Interaction with ELF2 isoform 2 (NERF-1a) may act to repress RUNX1-mediated transactivation. Interacts with KAT6A and KAT6B. Interacts with SUV39H1, leading to abrogation of transactivating and DNA-binding properties of RUNX1. Interacts with YAP1. Interaction with CDK6 prevents myeloid differentiation, reducing its transcription transactivation activity. Found in a complex with PRMT5, RUNX1 and CBFB. Interacts with FOXP3. Interacts with TBX21. Interacts with DPF2. Post-translationally, phosphorylated in its C-terminus upon IL-6 treatment. Phosphorylation enhances interaction with KAT6A. In terms of processing, methylated. Phosphorylated in Ser-249 Thr-273 and Ser-276 by HIPK2 when associated with CBFB and DNA. This phosphorylation promotes subsequent EP300 phosphorylation. As to expression, isoform 4 is expressed at high levels in thymus, spleen and T-cell lines and at lower levels in myeloid cell lines and nonhematopoietic cells. Isoform 5 is expressed ubiquitously in lumbar vertebrae, brain, kidney, heart, muscle, ovary and osteoblast-like cell line MC3T3-E1.

Its subcellular location is the nucleus. Its function is as follows. Forms the heterodimeric complex core-binding factor (CBF) with CBFB. RUNX members modulate the transcription of their target genes through recognizing the core consensus binding sequence 5'-TGTGGT-3', or very rarely, 5'-TGCGGT-3', within their regulatory regions via their runt domain, while CBFB is a non-DNA-binding regulatory subunit that allosterically enhances the sequence-specific DNA-binding capacity of RUNX. The heterodimers bind to the core site of a number of enhancers and promoters, including murine leukemia virus, polyomavirus enhancer, T-cell receptor enhancers, LCK, IL3 and GM-CSF promoters. Essential for the development of normal hematopoiesis. Acts synergistically with ELF4 to transactivate the IL-3 promoter and with ELF2 to transactivate the BLK promoter. Inhibits KAT6B-dependent transcriptional activation. Involved in lineage commitment of immature T cell precursors. CBF complexes repress ZBTB7B transcription factor during cytotoxic (CD8+) T cell development. They bind to RUNX-binding sequence within the ZBTB7B locus acting as transcriptional silencer and allowing for cytotoxic T cell differentiation. CBF complexes binding to the transcriptional silencer is essential for recruitment of nuclear protein complexes that catalyze epigenetic modifications to establish epigenetic ZBTB7B silencing. Controls the anergy and suppressive function of regulatory T-cells (Treg) by associating with FOXP3. Activates the expression of IL2 and IFNG and down-regulates the expression of TNFRSF18, IL2RA and CTLA4, in conventional T-cells. Positively regulates the expression of RORC in T-helper 17 cells. Isoform 4 shows higher binding activities for target genes and binds TCR-beta-E2 and RAG-1 target site with threefold higher affinity than other isoforms. It is less effective in the context of neutrophil terminal differentiation. The polypeptide is Runt-related transcription factor 1 (Runx1) (Mus musculus (Mouse)).